Here is a 31-residue protein sequence, read N- to C-terminus: Cytochrome b6-f complex subunit 6 (31 aa).

The helical transmembrane segment at 4-24 (ITSYFGFLLVALTITSALFIG) threads the bilayer.

It belongs to the PetL family. The 4 large subunits of the cytochrome b6-f complex are cytochrome b6, subunit IV (17 kDa polypeptide, PetD), cytochrome f and the Rieske protein, while the 4 small subunits are PetG, PetL, PetM and PetN. The complex functions as a dimer.

Its subcellular location is the plastid. The protein resides in the chloroplast thylakoid membrane. Functionally, component of the cytochrome b6-f complex, which mediates electron transfer between photosystem II (PSII) and photosystem I (PSI), cyclic electron flow around PSI, and state transitions. PetL is important for photoautotrophic growth as well as for electron transfer efficiency and stability of the cytochrome b6-f complex. This is Cytochrome b6-f complex subunit 6 from Pelargonium hortorum (Common geranium).